We begin with the raw amino-acid sequence, 76 residues long: Liver-expressed antimicrobial peptide 2 (76 aa).

An N-terminal signal peptide occupies residues Met-1–Ser-22. Residues Ser-23 to Arg-36 constitute a propeptide that is removed on maturation. Cystine bridges form between Cys-53/Cys-64 and Cys-59/Cys-69.

This sequence belongs to the LEAP2 family.

The protein localises to the secreted. Its function is as follows. Has an antimicrobial activity. In Mus musculus (Mouse), this protein is Liver-expressed antimicrobial peptide 2 (Leap2).